The following is a 110-amino-acid chain: Nucleoid-associated protein bbp_426 (110 aa).

The protein belongs to the YbaB/EbfC family. As to quaternary structure, homodimer.

Its subcellular location is the cytoplasm. The protein resides in the nucleoid. Its function is as follows. Binds to DNA and alters its conformation. May be involved in regulation of gene expression, nucleoid organization and DNA protection. The sequence is that of Nucleoid-associated protein bbp_426 from Buchnera aphidicola subsp. Baizongia pistaciae (strain Bp).